Consider the following 145-residue polypeptide: MYPEIMLVPMREELTRIGIEETRTADAVDDAVRGTEGTLMVVVNSVCGCAAGKMRPGIRRAFDHATKPARSITVFAGQDGEATDRARGYFTGYPPSSPSIGFLREGQLVHMIQRSDIETRTADQIEALLTQAFDQYCGATAGAKS.

The protein belongs to the bacilliredoxin family.

The protein is Bacilliredoxin Acid345_1880 of Koribacter versatilis (strain Ellin345).